A 210-amino-acid chain; its full sequence is Transcriptional regulator DauR (210 aa).

Belongs to the DauR family.

Its function is as follows. DauR represses the dauBAR operon. The chain is Transcriptional regulator DauR from Pseudomonas aeruginosa (strain ATCC 15692 / DSM 22644 / CIP 104116 / JCM 14847 / LMG 12228 / 1C / PRS 101 / PAO1).